The primary structure comprises 97 residues: YcgL domain-containing protein Pmen_1774 (97 aa).

Residues 3-87 (RICSIYKSPR…PEEDYIQHLP (85 aa)) enclose the YcgL domain.

This is YcgL domain-containing protein Pmen_1774 from Ectopseudomonas mendocina (strain ymp) (Pseudomonas mendocina).